The chain runs to 235 residues: Probable WRKY transcription factor 66 (235 aa).

Positions 79–147 form a DNA-binding region, WRKY; the sequence is SPTPAHIDGF…YVGQHACEAP (69 aa).

The protein belongs to the WRKY group III family.

It localises to the nucleus. In terms of biological role, transcription factor. Interacts specifically with the W box (5'-(T)TGAC[CT]-3'), a frequently occurring elicitor-responsive cis-acting element. In Arabidopsis thaliana (Mouse-ear cress), this protein is Probable WRKY transcription factor 66 (WRKY66).